Here is a 354-residue protein sequence, read N- to C-terminus: Uroporphyrinogen decarboxylase (354 aa).

Substrate contacts are provided by residues 28-32, Asp-78, Tyr-155, Ser-210, and His-325; that span reads RQAGR.

It belongs to the uroporphyrinogen decarboxylase family. As to quaternary structure, homodimer.

It is found in the cytoplasm. The enzyme catalyses uroporphyrinogen III + 4 H(+) = coproporphyrinogen III + 4 CO2. Its pathway is porphyrin-containing compound metabolism; protoporphyrin-IX biosynthesis; coproporphyrinogen-III from 5-aminolevulinate: step 4/4. Its function is as follows. Catalyzes the decarboxylation of four acetate groups of uroporphyrinogen-III to yield coproporphyrinogen-III. This Crocosphaera subtropica (strain ATCC 51142 / BH68) (Cyanothece sp. (strain ATCC 51142)) protein is Uroporphyrinogen decarboxylase.